The following is a 450-amino-acid chain: Probable galactarate/D-glucarate transporter GudP (450 aa).

The Cytoplasmic segment spans residues 1–20; it reads MSSLSQAASSVEKRTNARYW. A helical membrane pass occupies residues 21–41; that stretch reads IVVMLFIVTSFNYGDRATLSI. Over 42 to 58 the chain is Periplasmic; it reads AGSEMAKDIGLDPVGMG. The chain crosses the membrane as a helical span at residues 59–79; that stretch reads YVFSAFSWAYVIGQIPGGWLL. The Cytoplasmic segment spans residues 80–85; the sequence is DRFGSK. A helical membrane pass occupies residues 86-105; sequence RVYFWSIFIWSMFTLLQGFV. The Periplasmic segment spans residues 106-109; the sequence is DIFS. A helical transmembrane segment spans residues 110–132; it reads GFGIIVALFTLRFLVGLAEAPSF. The Cytoplasmic segment spans residues 133–153; it reads PGNSRIVAAWFPAQERGTAVS. Residues 154–174 form a helical membrane-spanning segment; sequence IFNSAQYFATVIFAPIMGWLT. The Periplasmic segment spans residues 175–176; it reads HE. A helical transmembrane segment spans residues 177-197; that stretch reads VGWSHVFFFMGGLGIVISFIW. Residues 198 to 254 lie on the Cytoplasmic side of the membrane; that stretch reads LKVIHEPNQHPGVNKKELEYIAAGGALINMDQQNTKVKVPFSVKWGQIKQLLGSRMM. The chain crosses the membrane as a helical span at residues 255-275; the sequence is IGVYIGQYCINALTYFFITWF. Residues 276 to 290 lie on the Periplasmic side of the membrane; the sequence is PVYLVQARGMSILKA. The chain crosses the membrane as a helical span at residues 291 to 311; the sequence is GFVASVPAVCGFIGGVLGGII. Residues 312 to 329 lie on the Cytoplasmic side of the membrane; the sequence is SDWLMRRTGSLNIARKTP. The chain crosses the membrane as a helical span at residues 330–350; that stretch reads IVMGMLLSMVMVFCNYVNVEW. Methionine 351 is a topological domain (periplasmic). The helical transmembrane segment at 352 to 372 threads the bilayer; sequence IIGFMALAFFGKGIGALGWAV. Over 373 to 387 the chain is Cytoplasmic; that stretch reads MADTAPKEISGLSGG. A helical transmembrane segment spans residues 388–408; the sequence is LFNMFGNISGIVTPIAIGYIV. Over 409–415 the chain is Periplasmic; it reads GTTGSFN. Residues 416–436 form a helical membrane-spanning segment; the sequence is GALIYVGVHALIAVLSYLVLV. Residues 437–450 lie on the Cytoplasmic side of the membrane; sequence GDIKRIELKPVAGQ.

Belongs to the major facilitator superfamily. Phthalate permease family.

The protein localises to the cell inner membrane. The catalysed reaction is galactarate(in) + H(+)(in) = galactarate(out) + H(+)(out). It catalyses the reaction D-glucarate(in) + H(+)(in) = D-glucarate(out) + H(+)(out). The enzyme catalyses (R)-glycerate(in) + H(+)(in) = (R)-glycerate(out) + H(+)(out). In terms of biological role, probably involved in the uptake of galactarate and/or D-glucarate. May also transport D-glycerate. This Escherichia coli (strain K12) protein is Probable galactarate/D-glucarate transporter GudP.